Here is a 265-residue protein sequence, read N- to C-terminus: Aquaporin-5 (265 aa).

Residues 1–12 (MKKEVCSLAFFK) are Cytoplasmic-facing. Residues 13–33 (AVFAEFLATLIFVFFGLGSAL) traverse the membrane as a helical segment. At 34–39 (KWPSAL) the chain is on the extracellular side. Residues 40 to 60 (PTILQISIAFGLAIGTLAQAL) form a helical membrane-spanning segment. Residues 61 to 65 (GPVSG) are Cytoplasmic-facing. Positions 66–74 (GHINPAITL) form an intramembrane region, discontinuously helical. Residues 69-71 (NPA) carry the NPA 1 motif. The Cytoplasmic portion of the chain corresponds to 75–87 (ALLIGNQISLLRA). A helical membrane pass occupies residues 88–108 (VFYVAAQLVGAIAGAGILYWL). The Extracellular portion of the chain corresponds to 109–126 (APLNARGNLAVNALNNNT). A glycan (N-linked (GlcNAc...) asparagine) is linked at Asn-124. A helical transmembrane segment spans residues 127 to 147 (TPGKAMVVELILTFQLALCIF). At 148–158 (SSTDSRRTSPV) the chain is on the cytoplasmic side. The helical transmembrane segment at 159 to 179 (GSPALSIGLSVTLGHLVGIYF) threads the bilayer. A topological domain (extracellular) is located at residue Thr-180. An intramembrane region (discontinuously helical) is located at residues 181 to 191 (GCSMNPARSFG). An NPA 2 motif is present at residues 185–187 (NPA). At 192-203 (PAVVMNRFSPSH) the chain is on the extracellular side. Residues 204–224 (WVFWVGPIVGAMLAAILYFYL) traverse the membrane as a helical segment. Over 225 to 265 (LFPSSLSLHDRVAVVKGTYEPEEDWEDHREERKKTIELTAH) the chain is Cytoplasmic.

It belongs to the MIP/aquaporin (TC 1.A.8) family. Homotetramer; each monomer provides an independent water pore. Interacts with TRPV4; the interaction is probably indirect and regulates TRPV4 activation by hypotonicity. In terms of tissue distribution, salivary glands, lacrimal glands, corneal epithelium in eye, trachea and lung.

The protein resides in the apical cell membrane. The protein localises to the cell membrane. It localises to the cytoplasmic vesicle membrane. The enzyme catalyses H2O(in) = H2O(out). In terms of biological role, aquaporins form homotetrameric transmembrane channels, with each monomer independently mediating water transport across the plasma membrane along its osmotic gradient. Plays an important role in fluid secretion in salivary glands. Required for TRPV4 activation by hypotonicity. Together with TRPV4, controls regulatory volume decrease in salivary epithelial cells. Seems to play a redundant role in water transport in the eye, lung and in sweat glands. The protein is Aquaporin-5 of Rattus norvegicus (Rat).